An 833-amino-acid chain; its full sequence is RNA-binding protein 5-A (833 aa).

Positions 1–87 (MGSDKRVSRS…GYHSDGDYMD (87 aa)) are disordered. An RRM 1 domain is found at 102-182 (KTIMLRGLPI…KTIAMHYSNP (81 aa)). The RanBP2-type zinc finger occupies 185-214 (KFEDWLCNKCGLYNFRRRLKCFRCGAAKAE). The RRM 2 domain maps to 241–325 (SAIILRNIGP…KTIGVDFAKS (85 aa)). Positions 396 to 428 (TGAAEQGTAPQAESSSPVPATTSAVVCQSPQMY) are enriched in polar residues. Disordered stretches follow at residues 396 to 458 (TGAA…EEAA) and 523 to 559 (AADG…TAQQ). The segment covering 429-458 (QQPGSPTQSSTSTVAASATPASGTSAEEAA) has biased composition (low complexity). The segment at 667 to 692 (LACLLCRRQFPNKDALTRHQQLSDLH) adopts a C2H2-type zinc-finger fold. In terms of domain architecture, G-patch spans 761–807 (NSNIGNKMLQAMGWKEGSGLGRKSQGITAPIQAQVRMRGAGLGAKGS).

The protein belongs to the RBM5/RBM10 family. In terms of assembly, component of the spliceosome A complex (also known as the prespliceosome). Appears to dissociate from the spliceosome upon formation of the spliceosome B complex (also known as the precatalytic spliceosome), in which the heterotrimeric U4/U6.U5 snRNPs are bound.

The protein resides in the nucleus. Functionally, component of the spliceosome A complex. Regulates alternative splicing of a number of mRNAs. May modulate splice site pairing after recruitment of the U1 and U2 snRNPs to the 5' and 3' splice sites of the intron. In Xenopus laevis (African clawed frog), this protein is RNA-binding protein 5-A (rbm5-a).